Here is a 213-residue protein sequence, read N- to C-terminus: Imidazole glycerol phosphate synthase subunit HisH (213 aa).

Residues 6 to 213 (LVTVIDYGMG…FKNFLNWNGQ (208 aa)) form the Glutamine amidotransferase type-1 domain. C86 serves as the catalytic Nucleophile. Residues H192 and E194 contribute to the active site.

Heterodimer of HisH and HisF.

The protein localises to the cytoplasm. The enzyme catalyses 5-[(5-phospho-1-deoxy-D-ribulos-1-ylimino)methylamino]-1-(5-phospho-beta-D-ribosyl)imidazole-4-carboxamide + L-glutamine = D-erythro-1-(imidazol-4-yl)glycerol 3-phosphate + 5-amino-1-(5-phospho-beta-D-ribosyl)imidazole-4-carboxamide + L-glutamate + H(+). It catalyses the reaction L-glutamine + H2O = L-glutamate + NH4(+). It participates in amino-acid biosynthesis; L-histidine biosynthesis; L-histidine from 5-phospho-alpha-D-ribose 1-diphosphate: step 5/9. In terms of biological role, IGPS catalyzes the conversion of PRFAR and glutamine to IGP, AICAR and glutamate. The HisH subunit catalyzes the hydrolysis of glutamine to glutamate and ammonia as part of the synthesis of IGP and AICAR. The resulting ammonia molecule is channeled to the active site of HisF. The polypeptide is Imidazole glycerol phosphate synthase subunit HisH (Hydrogenovibrio crunogenus (strain DSM 25203 / XCL-2) (Thiomicrospira crunogena)).